We begin with the raw amino-acid sequence, 752 residues long: Polyribonucleotide nucleotidyltransferase (752 aa).

Asp-542 and Asp-548 together coordinate Mg(2+). In terms of domain architecture, KH spans 608-667 (PRITTIQIPVSKIGELIGPKGKNINALTEETGANISIEDDGTVFISAASGEAAEAAIEKI). In terms of domain architecture, S1 motif spans 679–748 (GERFLGTVVK…NRGKISLVPV (70 aa)).

This sequence belongs to the polyribonucleotide nucleotidyltransferase family. It depends on Mg(2+) as a cofactor.

It is found in the cytoplasm. The catalysed reaction is RNA(n+1) + phosphate = RNA(n) + a ribonucleoside 5'-diphosphate. In terms of biological role, involved in mRNA degradation. Catalyzes the phosphorolysis of single-stranded polyribonucleotides processively in the 3'- to 5'-direction. The chain is Polyribonucleotide nucleotidyltransferase from Corynebacterium efficiens (strain DSM 44549 / YS-314 / AJ 12310 / JCM 11189 / NBRC 100395).